Here is a 154-residue protein sequence, read N- to C-terminus: uncharacterized protein (154 aa).

Its subcellular location is the mitochondrion. This is an uncharacterized protein from Vicia faba (Broad bean).